Reading from the N-terminus, the 105-residue chain is Small ribosomal subunit protein bS18 (105 aa).

Over residues 1 to 10 the composition is skewed to polar residues; it reads MAEETNQQAP. Residues 1–34 are disordered; the sequence is MAEETNQQAPESGASSSQPTSRPSGPRGGSGGRK. Residues 12–25 show a composition bias toward low complexity; that stretch reads SGASSSQPTSRPSG.

The protein belongs to the bacterial ribosomal protein bS18 family. Part of the 30S ribosomal subunit. Forms a tight heterodimer with protein bS6.

Binds as a heterodimer with protein bS6 to the central domain of the 16S rRNA, where it helps stabilize the platform of the 30S subunit. The protein is Small ribosomal subunit protein bS18 of Acidobacterium capsulatum (strain ATCC 51196 / DSM 11244 / BCRC 80197 / JCM 7670 / NBRC 15755 / NCIMB 13165 / 161).